A 92-amino-acid polypeptide reads, in one-letter code: MATEQTILVGKKPTTNYVIATVMAFNAGVKKVVLKARGAAISKAVSTAVMVRDRFLPGKVQIKDIKLLSDKVQGQGGRERTVAAIEVVLEMA.

Lysine 11 bears the N6-acetyllysine mark.

This sequence belongs to the histone-like Alba family. Post-translationally, acetylated. Acetylation at Lys-11 decreases DNA-binding affinity.

The protein resides in the cytoplasm. It is found in the chromosome. In terms of biological role, binds double-stranded DNA tightly but without sequence specificity. Involved in DNA compaction. The protein is DNA/RNA-binding protein Alba of Pyrobaculum aerophilum (strain ATCC 51768 / DSM 7523 / JCM 9630 / CIP 104966 / NBRC 100827 / IM2).